We begin with the raw amino-acid sequence, 238 residues long: Histidine/lysine/arginine/ornithine transport system permease protein HisM (238 aa).

Over 1-26 (MIEILHEYWKPLLWTDGYRFTGVAIT) the chain is Periplasmic. Residues 23–221 (VAITLWLLIL…IISYVLISLF (199 aa)) enclose the ABC transmembrane type-1 domain. The chain crosses the membrane as a helical span at residues 27–47 (LWLLILSVVIGGVLALFLAIG). The Cytoplasmic portion of the chain corresponds to 48 to 58 (RVSSNKYIQFP). Residues 59–79 (IWLFTYIFRGTPLYVQLLVFY) form a helical membrane-spanning segment. Residues 80 to 104 (SGMYTLEIVKGTEFLNAFFRSGLNC) lie on the Periplasmic side of the membrane. A helical transmembrane segment spans residues 105 to 125 (TVLALTLNTCAYTTEIFAGAI). Topologically, residues 126–157 (RSVPHGEIEAARAYGFSTFKMYRCIILPSALR) are cytoplasmic. The chain crosses the membrane as a helical span at residues 158 to 178 (IALPAYSNEVILMLHSTALAF). At 179-199 (TATVPDLLKIARDINAATYQP) the chain is on the periplasmic side. The chain crosses the membrane as a helical span at residues 200 to 220 (FTAFGIAAVLYLIISYVLISL). The Cytoplasmic segment spans residues 221–238 (FRRAEKRWLQHVKPSSTH).

It belongs to the binding-protein-dependent transport system permease family. HisMQ subfamily. The HisPMQJ complex is composed of two ATP-binding proteins (HisP), two transmembrane proteins (HisM and HisQ) and a solute-binding protein (HisJ). The HisPMQ-ArgT complex is composed of two ATP-binding proteins (HisP), two transmembrane proteins (HisM and HisQ) and a solute-binding protein (ArgT).

It is found in the cell inner membrane. Its function is as follows. Part of the ABC transporter complex HisPMQJ involved in histidine transport. Is also part of the ABC transporter complex HisPMQ-ArgT involved in lysine/arginine/ornithine transport. Probably responsible for the translocation of the substrate across the membrane. The sequence is that of Histidine/lysine/arginine/ornithine transport system permease protein HisM (hisM) from Escherichia coli O157:H7.